The primary structure comprises 100 residues: Urease subunit gamma (100 aa).

This sequence belongs to the urease gamma subunit family. In terms of assembly, heterotrimer of UreA (gamma), UreB (beta) and UreC (alpha) subunits. Three heterotrimers associate to form the active enzyme.

It is found in the cytoplasm. It carries out the reaction urea + 2 H2O + H(+) = hydrogencarbonate + 2 NH4(+). Its pathway is nitrogen metabolism; urea degradation; CO(2) and NH(3) from urea (urease route): step 1/1. This chain is Urease subunit gamma, found in Rhodococcus opacus (strain B4).